A 154-amino-acid polypeptide reads, in one-letter code: MPQLATICYIDNGKELLMLHRNKKPNDVHEGKWIGVGGKLERGETPQECAAREILEETGLKAKPVLKGVITFPEFTPDLDWYTYVFKVTEFEGDLIDCNEGTLEWVPYDEVLSKPTWEGDHTFVEWLLEDKPFFSAKFVYDGDKLLDTQVDFYE.

A Nudix hydrolase domain is found at 1-129; that stretch reads MPQLATICYI…DHTFVEWLLE (129 aa). Glycine 38, glutamate 53, glutamate 56, and glutamate 57 together coordinate Mg(2+). Residues 38-59 carry the Nudix box motif; it reads GKLERGETPQECAAREILEETG.

The protein belongs to the Nudix hydrolase family. In terms of assembly, homotrimer. Mg(2+) serves as cofactor.

It carries out the reaction 8-oxo-dGTP + H2O = 8-oxo-dGMP + diphosphate + H(+). Its function is as follows. Involved in the DNA repair system to avoid A.T to G.C transversions. Degrades 8-oxo-dGTP to the monophosphate, but is also active on all of the nucleoside triphosphates. This chain is 8-oxo-dGTP diphosphatase (mutX), found in Streptococcus pneumoniae serotype 4 (strain ATCC BAA-334 / TIGR4).